Consider the following 234-residue polypeptide: Glutathione S-transferase U11 (234 aa).

In terms of domain architecture, GST N-terminal spans 11-90; that stretch reads EYVKLLGAWP…YVDETWLSGP (80 aa). Residues 21–22, 47–48, 61–62, and 74–75 contribute to the glutathione site; these read SP, LS, QI, and ES. The region spanning 96-228 is the GST C-terminal domain; sequence DPFDRAVARF…KLVQFARLKF (133 aa).

It belongs to the GST superfamily. Tau family.

Its subcellular location is the cytoplasm. It is found in the cytosol. It catalyses the reaction RX + glutathione = an S-substituted glutathione + a halide anion + H(+). Functionally, may be involved in the conjugation of reduced glutathione to a wide number of exogenous and endogenous hydrophobic electrophiles and have a detoxification role against certain herbicides. The polypeptide is Glutathione S-transferase U11 (GSTU11) (Arabidopsis thaliana (Mouse-ear cress)).